The following is a 479-amino-acid chain: Ankyrin repeat, SAM and basic leucine zipper domain-containing protein 1 (479 aa).

Residues serine 22 and serine 24 each carry the phosphoserine modification. ANK repeat units follow at residues 49-78 (EKNETFKKALTTGDILLVKELLNSGISVDS), 82-111 (YGWTPLMYAASVSNVELVRVLLDRGANASF), 114-148 (DKQTILITACSARGSEEQILKCVELLLSRNADPNV), 152-181 (RLMTPIMYAARDGHTQVVALLVAHGAEVNT), 185-214 (NGYTALTWAARQGHKNVVLKLLELGANKML), and 218-247 (DGKTPSEIAKRNKHVEIFSFLSLTLNPLEG). Residues 276–338 (SYTALGDLEI…KILDALKELQ (63 aa)) form the SAM domain.

As to quaternary structure, interacts with DDX4, PIWIL1, RANBP9 and TDRD1.

The protein resides in the cytoplasm. Its function is as follows. Plays a central role during spermatogenesis by repressing transposable elements and preventing their mobilization, which is essential for the germline integrity. Acts via the piRNA metabolic process, which mediates the repression of transposable elements during meiosis by forming complexes composed of piRNAs and Piwi proteins and governs the methylation and subsequent repression of transposons. Its association with pi-bodies suggests a participation in the primary piRNAs metabolic process. Required prior to the pachytene stage to facilitate the production of multiple types of piRNAs, including those associated with repeats involved in the regulation of retrotransposons. May act by mediating protein-protein interactions during germ cell maturation. The polypeptide is Ankyrin repeat, SAM and basic leucine zipper domain-containing protein 1 (ASZ1) (Rhinolophus ferrumequinum (Greater horseshoe bat)).